Reading from the N-terminus, the 427-residue chain is 3-phosphoshikimate 1-carboxyvinyltransferase (427 aa).

3-phosphoshikimate contacts are provided by lysine 22, serine 23, and arginine 27. Lysine 22 lines the phosphoenolpyruvate pocket. Phosphoenolpyruvate is bound by residues glycine 96 and arginine 124. Residues serine 169, serine 170, glutamine 171, serine 197, aspartate 313, asparagine 336, and lysine 340 each contribute to the 3-phosphoshikimate site. Glutamine 171 is a phosphoenolpyruvate binding site. Residue aspartate 313 is the Proton acceptor of the active site. Arginine 344, arginine 386, and lysine 411 together coordinate phosphoenolpyruvate.

Belongs to the EPSP synthase family. As to quaternary structure, monomer.

Its subcellular location is the cytoplasm. The enzyme catalyses 3-phosphoshikimate + phosphoenolpyruvate = 5-O-(1-carboxyvinyl)-3-phosphoshikimate + phosphate. It functions in the pathway metabolic intermediate biosynthesis; chorismate biosynthesis; chorismate from D-erythrose 4-phosphate and phosphoenolpyruvate: step 6/7. In terms of biological role, catalyzes the transfer of the enolpyruvyl moiety of phosphoenolpyruvate (PEP) to the 5-hydroxyl of shikimate-3-phosphate (S3P) to produce enolpyruvyl shikimate-3-phosphate and inorganic phosphate. This is 3-phosphoshikimate 1-carboxyvinyltransferase from Escherichia coli (strain SMS-3-5 / SECEC).